The sequence spans 169 residues: S-ribosylhomocysteine lyase (169 aa).

3 residues coordinate Fe cation: His-54, His-58, and Cys-128.

It belongs to the LuxS family. In terms of assembly, homodimer. The cofactor is Fe cation.

It carries out the reaction S-(5-deoxy-D-ribos-5-yl)-L-homocysteine = (S)-4,5-dihydroxypentane-2,3-dione + L-homocysteine. In terms of biological role, involved in the synthesis of autoinducer 2 (AI-2) which is secreted by bacteria and is used to communicate both the cell density and the metabolic potential of the environment. The regulation of gene expression in response to changes in cell density is called quorum sensing. Catalyzes the transformation of S-ribosylhomocysteine (RHC) to homocysteine (HC) and 4,5-dihydroxy-2,3-pentadione (DPD). The chain is S-ribosylhomocysteine lyase from Shewanella frigidimarina (strain NCIMB 400).